The chain runs to 951 residues: Multiple C2 and transmembrane domain-containing protein 1 (951 aa).

Disordered regions lie at residues 29–79 (LGVG…RWSG), 92–117 (SSSQ…AEQG), 129–198 (LPVA…QKSS), and 210–231 (LEPA…ALQK). Residues 31–43 (VGKGKGGGGGRAG) show a composition bias toward gly residues. Residues 147–168 (PGGRSPDSAPSSSSASSSLSSS) are compositionally biased toward low complexity. Positions 174-184 (RGDRVRDESTR) are enriched in basic and acidic residues. The span at 219 to 228 (PARGPAEPQA) shows a compositional bias: low complexity. C2 domains lie at 240-358 (KIST…DVTL), 404-521 (QTQS…KLEL), and 555-676 (QKER…AYVL). 15 residues coordinate Ca(2+): Asp275, Asp281, Asp328, Asp330, Asp336, Asp438, Asp444, Asp491, Asp493, Asp499, Asp594, Asp600, Asp646, Asp648, and Asp654. The next 2 membrane-spanning stretches (helical) occupy residues 763-783 (FVLF…LLLL) and 866-886 (PFLS…LYFI).

This sequence belongs to the MCTP family. It depends on Ca(2+) as a cofactor.

It localises to the cytoplasmic vesicle. It is found in the secretory vesicle. Its subcellular location is the synaptic vesicle membrane. The protein resides in the recycling endosome. The protein localises to the endoplasmic reticulum membrane. Calcium sensor which is essential for the stabilization of normal baseline neurotransmitter release and for the induction and long-term maintenance of presynaptic homeostatic plasticity. This Mus musculus (Mouse) protein is Multiple C2 and transmembrane domain-containing protein 1.